We begin with the raw amino-acid sequence, 185 residues long: Ribosome-recycling factor (185 aa).

The tract at residues 143–163 (RKDGEAGEDEVARAEKDLDKS) is disordered.

The protein belongs to the RRF family.

Its subcellular location is the cytoplasm. Responsible for the release of ribosomes from messenger RNA at the termination of protein biosynthesis. May increase the efficiency of translation by recycling ribosomes from one round of translation to another. The polypeptide is Ribosome-recycling factor (Mycobacterium ulcerans (strain Agy99)).